A 346-amino-acid polypeptide reads, in one-letter code: Large ribosomal subunit protein uL3 (346 aa).

Positions 324–346 (KPPKKKPPVERPQITYVSRESKQ) are disordered.

This sequence belongs to the universal ribosomal protein uL3 family. In terms of assembly, part of the 50S ribosomal subunit. Forms a cluster with proteins L14 and L24e.

Its function is as follows. One of the primary rRNA binding proteins, it binds directly near the 3'-end of the 23S rRNA, where it nucleates assembly of the 50S subunit. This Thermococcus gammatolerans (strain DSM 15229 / JCM 11827 / EJ3) protein is Large ribosomal subunit protein uL3.